The chain runs to 563 residues: Dihydroxy-acid dehydratase (563 aa).

A [2Fe-2S] cluster-binding site is contributed by C50. D82 contacts Mg(2+). Residue C123 coordinates [2Fe-2S] cluster. The Mg(2+) site is built by D124 and K125. Position 125 is an N6-carboxylysine (K125). C195 is a binding site for [2Fe-2S] cluster. Residue E447 participates in Mg(2+) binding. S473 functions as the Proton acceptor in the catalytic mechanism.

It belongs to the IlvD/Edd family. As to quaternary structure, homodimer. [2Fe-2S] cluster serves as cofactor. It depends on Mg(2+) as a cofactor.

It carries out the reaction (2R)-2,3-dihydroxy-3-methylbutanoate = 3-methyl-2-oxobutanoate + H2O. It catalyses the reaction (2R,3R)-2,3-dihydroxy-3-methylpentanoate = (S)-3-methyl-2-oxopentanoate + H2O. Its pathway is amino-acid biosynthesis; L-isoleucine biosynthesis; L-isoleucine from 2-oxobutanoate: step 3/4. It participates in amino-acid biosynthesis; L-valine biosynthesis; L-valine from pyruvate: step 3/4. Its function is as follows. Functions in the biosynthesis of branched-chain amino acids. Catalyzes the dehydration of (2R,3R)-2,3-dihydroxy-3-methylpentanoate (2,3-dihydroxy-3-methylvalerate) into 2-oxo-3-methylpentanoate (2-oxo-3-methylvalerate) and of (2R)-2,3-dihydroxy-3-methylbutanoate (2,3-dihydroxyisovalerate) into 2-oxo-3-methylbutanoate (2-oxoisovalerate), the penultimate precursor to L-isoleucine and L-valine, respectively. This is Dihydroxy-acid dehydratase from Nostoc sp. (strain PCC 7120 / SAG 25.82 / UTEX 2576).